Reading from the N-terminus, the 335-residue chain is GTPase Obg (335 aa).

Residues methionine 1–methionine 159 enclose the Obg domain. Positions alanine 160–lysine 332 constitute an OBG-type G domain. GTP is bound by residues glycine 166–serine 173, phenylalanine 191–histidine 195, aspartate 212–glycine 215, asparagine 282–aspartate 285, and serine 313–leucine 315. Serine 173 and threonine 193 together coordinate Mg(2+).

This sequence belongs to the TRAFAC class OBG-HflX-like GTPase superfamily. OBG GTPase family. Monomer. It depends on Mg(2+) as a cofactor.

It localises to the cytoplasm. An essential GTPase which binds GTP, GDP and possibly (p)ppGpp with moderate affinity, with high nucleotide exchange rates and a fairly low GTP hydrolysis rate. Plays a role in control of the cell cycle, stress response, ribosome biogenesis and in those bacteria that undergo differentiation, in morphogenesis control. In Ruthia magnifica subsp. Calyptogena magnifica, this protein is GTPase Obg.